A 192-amino-acid polypeptide reads, in one-letter code: Peptide deformylase (192 aa).

Residues cysteine 102 and histidine 145 each coordinate Fe cation. Glutamate 146 is a catalytic residue. Histidine 149 provides a ligand contact to Fe cation.

Belongs to the polypeptide deformylase family. Fe(2+) is required as a cofactor.

The catalysed reaction is N-terminal N-formyl-L-methionyl-[peptide] + H2O = N-terminal L-methionyl-[peptide] + formate. Functionally, removes the formyl group from the N-terminal Met of newly synthesized proteins. Requires at least a dipeptide for an efficient rate of reaction. N-terminal L-methionine is a prerequisite for activity but the enzyme has broad specificity at other positions. This chain is Peptide deformylase, found in Thermus thermophilus (strain ATCC BAA-163 / DSM 7039 / HB27).